Consider the following 348-residue polypeptide: Quinolinate synthase (348 aa).

Residues His-47 and Ser-68 each contribute to the iminosuccinate site. Residue Cys-113 coordinates [4Fe-4S] cluster. Residues 139-141 and Ser-156 each bind iminosuccinate; that span reads YAN. Cys-200 lines the [4Fe-4S] cluster pocket. Iminosuccinate contacts are provided by residues 226 to 228 and Thr-243; that span reads HPE. Cys-297 lines the [4Fe-4S] cluster pocket.

It belongs to the quinolinate synthase family. Type 1 subfamily. Requires [4Fe-4S] cluster as cofactor.

The protein resides in the cytoplasm. It catalyses the reaction iminosuccinate + dihydroxyacetone phosphate = quinolinate + phosphate + 2 H2O + H(+). Its pathway is cofactor biosynthesis; NAD(+) biosynthesis; quinolinate from iminoaspartate: step 1/1. Functionally, catalyzes the condensation of iminoaspartate with dihydroxyacetone phosphate to form quinolinate. The protein is Quinolinate synthase of Sodalis glossinidius (strain morsitans).